Here is a 297-residue protein sequence, read N- to C-terminus: Large ribosomal subunit protein uL24m (297 aa).

At S2 the chain carries N-acetylserine. The KOW domain maps to 63–96; the sequence is FIPGDRVVVMSGASKGNIAVIKSFDKRTNSFILD.

This sequence belongs to the universal ribosomal protein uL24 family. As to quaternary structure, component of the mitochondrial large ribosomal subunit (mt-LSU). Mature yeast 74S mitochondrial ribosomes consist of a small (37S) and a large (54S) subunit. The 37S small subunit contains a 15S ribosomal RNA (15S mt-rRNA) and 34 different proteins. The 54S large subunit contains a 21S rRNA (21S mt-rRNA) and 46 different proteins. uL24m forms the wall of the exit tunnel.

The protein resides in the mitochondrion. Its function is as follows. Component of the mitochondrial ribosome (mitoribosome), a dedicated translation machinery responsible for the synthesis of mitochondrial genome-encoded proteins, including at least some of the essential transmembrane subunits of the mitochondrial respiratory chain. The mitoribosomes are attached to the mitochondrial inner membrane and translation products are cotranslationally integrated into the membrane. This chain is Large ribosomal subunit protein uL24m (MRPL40), found in Saccharomyces cerevisiae (strain ATCC 204508 / S288c) (Baker's yeast).